The primary structure comprises 466 residues: 55 kDa erythrocyte membrane protein (466 aa).

An N-acetylthreonine modification is found at Thr-2. A phosphoserine mark is found at Ser-13 and Ser-19. Position 49 is a phosphothreonine (Thr-49). 3 positions are modified to phosphoserine: Ser-52, Ser-57, and Ser-110. In terms of domain architecture, PDZ spans Leu-71–Gln-152. The SH3 domain occupies Ala-158–Val-228. Ser-243 bears the Phosphoserine mark. Residues Val-268–Tyr-466 form an interaction with PALS1 region. The 170-residue stretch at Arg-282–Asp-451 folds into the Guanylate kinase-like domain.

This sequence belongs to the MAGUK family. Heterodimer with PALS1. Interacts with DLG5 and NF2. Interacts (via guanylate kinase-like domain) with WHRN (via third PDZ domain). In terms of processing, palmitoylated.

The protein resides in the cell membrane. It is found in the cell projection. It localises to the stereocilium. Its function is as follows. Essential regulator of neutrophil polarity. Regulates neutrophil polarization by regulating AKT1 phosphorylation through a mechanism that is independent of PIK3CG activity. In Papio anubis (Olive baboon), this protein is 55 kDa erythrocyte membrane protein (MPP1).